The following is a 368-amino-acid chain: Methylthioribose-1-phosphate isomerase (368 aa).

Residues 54 to 56 (RGA), arginine 91, and glutamine 204 each bind substrate. The active-site Proton donor is the aspartate 245. 255–256 (NK) lines the substrate pocket.

Belongs to the eIF-2B alpha/beta/delta subunits family. MtnA subfamily.

It carries out the reaction 5-(methylsulfanyl)-alpha-D-ribose 1-phosphate = 5-(methylsulfanyl)-D-ribulose 1-phosphate. It functions in the pathway amino-acid biosynthesis; L-methionine biosynthesis via salvage pathway; L-methionine from S-methyl-5-thio-alpha-D-ribose 1-phosphate: step 1/6. Functionally, catalyzes the interconversion of methylthioribose-1-phosphate (MTR-1-P) into methylthioribulose-1-phosphate (MTRu-1-P). The sequence is that of Methylthioribose-1-phosphate isomerase from Gluconobacter oxydans (strain 621H) (Gluconobacter suboxydans).